Here is a 71-residue protein sequence, read N- to C-terminus: uncharacterized protein (71 aa).

The helical transmembrane segment at 44–66 (LFFLVFRRLFSWFLVLLPSPRFF) threads the bilayer.

It localises to the membrane. This is an uncharacterized protein from Saccharomyces cerevisiae (strain ATCC 204508 / S288c) (Baker's yeast).